We begin with the raw amino-acid sequence, 97 residues long: Large ribosomal subunit protein uL23 (97 aa).

Belongs to the universal ribosomal protein uL23 family. As to quaternary structure, part of the 50S ribosomal subunit. Contacts protein L29, and trigger factor when it is bound to the ribosome.

Functionally, one of the early assembly proteins it binds 23S rRNA. One of the proteins that surrounds the polypeptide exit tunnel on the outside of the ribosome. Forms the main docking site for trigger factor binding to the ribosome. The sequence is that of Large ribosomal subunit protein uL23 from Sulfurihydrogenibium sp. (strain YO3AOP1).